Consider the following 372-residue polypeptide: DNA/RNA-binding protein ALBA4 (372 aa).

This sequence belongs to the histone-like Alba family. Identified in a TARE6-associated complex consisting of over 30 proteins and including ALBA1, ALBA2 and ALBA4; the complex binds to the non-coding subtelomeric repeat region TARE6.

It localises to the nucleus. Its subcellular location is the chromosome. The protein localises to the telomere. The protein resides in the cytoplasm. Its function is as follows. Possesses DNA- and RNA-binding activities. Binds to DNA fragments longer than 14 base pairs with relaxed sequence specificity. Associates with the subtelomeric TARE6 repeats. Regulates the abundance of transcript sub-populations in a stage-specific manner. Regulates activation of male gametocytes. Participates in the coordination of sporozoite development in the oocyst. The sequence is that of DNA/RNA-binding protein ALBA4 from Plasmodium falciparum (isolate 3D7).